The primary structure comprises 210 residues: Glycerol-3-phosphate acyltransferase (210 aa).

5 helical membrane-spanning segments follow: residues 10–30 (ALIL…GIVI), 59–79 (PAAL…VLIA), 87–107 (AAQL…WLGF), 116–136 (FLGT…LTWL), and 161–181 (LLLG…LIFI).

This sequence belongs to the PlsY family. In terms of assembly, probably interacts with PlsX.

It localises to the cell inner membrane. The catalysed reaction is an acyl phosphate + sn-glycerol 3-phosphate = a 1-acyl-sn-glycero-3-phosphate + phosphate. It participates in lipid metabolism; phospholipid metabolism. Catalyzes the transfer of an acyl group from acyl-phosphate (acyl-PO(4)) to glycerol-3-phosphate (G3P) to form lysophosphatidic acid (LPA). This enzyme utilizes acyl-phosphate as fatty acyl donor, but not acyl-CoA or acyl-ACP. The polypeptide is Glycerol-3-phosphate acyltransferase (Cereibacter sphaeroides (strain ATCC 17025 / ATH 2.4.3) (Rhodobacter sphaeroides)).